The chain runs to 247 residues: uncharacterized protein (247 aa).

The 136-residue stretch at 70–205 (ISLWMGPGNN…QKVPLEIMIR (136 aa)) folds into the N-acetyltransferase domain.

This sequence belongs to the acetyltransferase family.

The protein resides in the endoplasmic reticulum. Its subcellular location is the golgi apparatus. It localises to the vacuole. This is an uncharacterized protein from Schizosaccharomyces pombe (strain 972 / ATCC 24843) (Fission yeast).